The following is a 216-amino-acid chain: Ras-related protein Rab-5C (216 aa).

10 residues coordinate GTP: Ser30, Ala31, Gly33, Lys34, Ser35, Ser36, His47, Glu48, Thr53, and Gly79. Ser35 contributes to the Mg(2+) binding site. 2 consecutive short sequence motifs (switch) follow at residues 45–57 and 78–94; these read QFHEYQESTIGAA and AGQERYHSLAPMYYRGA. Thr53 provides a ligand contact to Mg(2+). A Phosphoserine modification is found at Ser85. Asn134, Lys135, Asp137, Ala165, and Lys166 together coordinate GTP. The segment at 185–216 is disordered; it reads NEPQNAAGAPSRNRGVDLQENSPASRSQCCSN. The segment covering 203–216 has biased composition (polar residues); it reads QENSPASRSQCCSN. Residues Cys213 and Cys214 are each lipidated (S-geranylgeranyl cysteine).

It belongs to the small GTPase superfamily. Rab family. As to quaternary structure, interacts with EEA1 and INCA1. Interacts with GDI1, GDI2, CHML and CHM; phosphorylation at Ser-85 disrupts this interaction. The cofactor is Mg(2+). Post-translationally, phosphorylation of Ser-85 in the switch II region by LRRK2 prevents the association of RAB regulatory proteins, including CHM, CHML and RAB GDP dissociation inhibitors GDI1 and GDI2.

The protein localises to the cell membrane. Its subcellular location is the early endosome membrane. It localises to the melanosome. It catalyses the reaction GTP + H2O = GDP + phosphate + H(+). Regulated by guanine nucleotide exchange factors (GEFs) which promote the exchange of bound GDP for free GTP. Regulated by GTPase activating proteins (GAPs) which increase the GTP hydrolysis activity. Inhibited by GDP dissociation inhibitors (GDIs). In terms of biological role, the small GTPases Rab are key regulators of intracellular membrane trafficking, from the formation of transport vesicles to their fusion with membranes. Rabs cycle between an inactive GDP-bound form and an active GTP-bound form that is able to recruit to membranes different sets of downstream effectors directly responsible for vesicle formation, movement, tethering and fusion. The chain is Ras-related protein Rab-5C (RAB5C) from Canis lupus familiaris (Dog).